The sequence spans 5005 residues: Bridge-like lipid transfer protein family member 1 (5005 aa).

The chain crosses the membrane as a helical span at residues 27–47 (VVWLLVATILSCGWIIYLTYY). Disordered stretches follow at residues 692 to 718 (RPAQKTSERVVSSPSMSPRPPVDPSEL) and 1205 to 1314 (KSVG…ASVC). Pro residues predominate over residues 708-718 (SPRPPVDPSEL). Residues 1205–1215 (KSVGIEGERKT) are compositionally biased toward basic and acidic residues. Low complexity predominate over residues 1226–1240 (SHSSSSSSEENSSSS). The span at 1248–1275 (GEKESPSSAADDHSVQKDLLHSARRDDG) shows a compositional bias: basic and acidic residues. Residues 1278–1303 (SVPTEISGTSPVSPNTQDKSVGQSPL) show a composition bias toward polar residues. Residues S1301, S1305, and S1323 each carry the phosphoserine modification. T1325 is subject to Phosphothreonine. 4 disordered regions span residues 1343-1376 (SDVSRSDENVLDSPKQRRSFGSFPYTPSADSNSF), 1399-1425 (EEFEPISSDEGPGTYPGRKKKKKQMQQ), 1521-1544 (TNKRTSKSSLHRPLDLDTPTSEES), and 1676-1698 (FSENLSPKQDIRGTKTEHPMIGT). Phosphoserine occurs at positions 1355 and 1406. A compositionally biased stretch (basic residues) spans 1521 to 1530 (TNKRTSKSSL). A compositionally biased stretch (basic and acidic residues) spans 1684–1693 (QDIRGTKTEH). A phosphoserine mark is found at S1805 and S1808. Disordered regions lie at residues 1927-1991 (RGGV…PLMP), 2165-2192 (PAQPLKPPATVDQEHEEGLGLDNGGGLQ), 2265-2288 (TSGDTATDSPVHVGRAGMPVKESP), 2367-2387 (ESPVTKSGHNSLPTGVAPNLP), 2400-2420 (SSDQNTLDGTHSQHSTSQDDV), and 2598-2677 (TAGS…KDVV). Polar residues-rich tracts occupy residues 1931–1948 (LTSNNSSDSPTGSGYNTD) and 1959–1971 (TSPSSDINGNSVS). Composition is skewed to polar residues over residues 2367–2379 (ESPVTKSGHNSLP), 2400–2418 (SSDQNTLDGTHSQHSTSQD), and 2598–2608 (TAGSASPTPTF). 2 positions are modified to phosphoserine: S2601 and S2603. Residues 2619–2638 (SDFSRSSRGSLNGGNRVNNA) are compositionally biased toward low complexity. Positions 2643–2665 (ANNENNKKESRNKNSLGRSERRT) are enriched in basic and acidic residues. Residue S2755 is modified to Phosphoserine. The disordered stretch occupies residues 2928–2967 (RQPSTAPQPMKEDIATPLPSEKTPTSVNQTPIETNEFPQL). Over residues 2949–2964 (KTPTSVNQTPIETNEF) the composition is skewed to polar residues. Phosphoserine is present on residues S3562, E3577, and S3653. Disordered regions lie at residues 3614–3662 (YSRS…TFNI), 3686–3744 (SSNS…ERFY), 3821–3843 (RRSYDRSSRSLDQDSPSKKKKFQ), 3935–3954 (KTNTLLPPQPPPIPSAKGKG), 4089–4145 (TTYP…SSSS), and 4325–4396 (QSAS…ASQQ). Over residues 3686 to 3711 (SSNSEGSCSVFSSPKTTGGFSPSVPF) the composition is skewed to polar residues. Over residues 3727–3736 (EDSEKDEKDE) the composition is skewed to acidic residues. Basic and acidic residues predominate over residues 3821 to 3837 (RRSYDRSSRSLDQDSPS). Polar residues predominate over residues 4097 to 4112 (SPGSNAPQTGAKTSAS). Positions 4117-4145 (PGSSGLGSPLGRSRHSSSQSDLTGSSSSS) are enriched in low complexity. S4124 is subject to Phosphoserine. Residues 4325–4358 (QSASFTHMPQSPNVFNEHMTNNTMSPGTAAQSLK) show a composition bias toward polar residues. A compositionally biased stretch (low complexity) spans 4359 to 4372 (SPASIRSRSVSDSS). A compositionally biased stretch (polar residues) spans 4381-4396 (KTSTPVNKSNKAASQQ).

In terms of tissue distribution, highly expressed in testis and ovary. Weakly or not expressed in other tissues.

It is found in the cell membrane. The protein resides in the endoplasmic reticulum membrane. The protein localises to the mitochondrion membrane. Tube-forming lipid transport protein which provides phosphatidylethanolamine for glycosylphosphatidylinositol (GPI) anchor synthesis in the endoplasmic reticulum. Plays a role in endosomal trafficking and endosome recycling. Also involved in the actin cytoskeleton and cilia structural dynamics. Acts as a regulator of phagocytosis. This chain is Bridge-like lipid transfer protein family member 1 (Bltp1), found in Mus musculus (Mouse).